The chain runs to 143 residues: Small ribosomal subunit protein uS12 (143 aa).

Belongs to the universal ribosomal protein uS12 family. Component of the 40S small ribosomal subunit.

It localises to the cytoplasm. It is found in the cytosol. Its subcellular location is the rough endoplasmic reticulum. The polypeptide is Small ribosomal subunit protein uS12 (rps23) (Gillichthys mirabilis (Long-jawed mudsucker)).